Consider the following 193-residue polypeptide: Oocyte-secreted protein 3 (193 aa).

The first 22 residues, 1-22 (MKDFVRLQSSFLLCTILTLSEQ), serve as a signal peptide directing secretion. 6 N-linked (GlcNAc...) asparagine glycosylation sites follow: Asn-64, Asn-130, Asn-148, Asn-151, Asn-165, and Asn-178.

This sequence belongs to the PLAC1 family.

It is found in the secreted. This Homo sapiens (Human) protein is Oocyte-secreted protein 3.